Consider the following 262-residue polypeptide: Acyl-[acyl-carrier-protein]--UDP-N-acetylglucosamine O-acyltransferase (262 aa).

This sequence belongs to the transferase hexapeptide repeat family. LpxA subfamily. As to quaternary structure, homotrimer.

The protein resides in the cytoplasm. It catalyses the reaction a (3R)-hydroxyacyl-[ACP] + UDP-N-acetyl-alpha-D-glucosamine = a UDP-3-O-[(3R)-3-hydroxyacyl]-N-acetyl-alpha-D-glucosamine + holo-[ACP]. Its pathway is glycolipid biosynthesis; lipid IV(A) biosynthesis; lipid IV(A) from (3R)-3-hydroxytetradecanoyl-[acyl-carrier-protein] and UDP-N-acetyl-alpha-D-glucosamine: step 1/6. In terms of biological role, involved in the biosynthesis of lipid A, a phosphorylated glycolipid that anchors the lipopolysaccharide to the outer membrane of the cell. This Psychromonas ingrahamii (strain DSM 17664 / CCUG 51855 / 37) protein is Acyl-[acyl-carrier-protein]--UDP-N-acetylglucosamine O-acyltransferase.